The following is a 552-amino-acid chain: Cation transporter HKT1;1 (552 aa).

The Cytoplasmic portion of the chain corresponds to 1 to 70; it reads MHPPSLVLDT…QSYSFLVCKS (70 aa). 2 consecutive transmembrane segments (helical) span residues 71–91 and 133–153; these read NPLV…FLAL and LWVL…MLGL. The Cytoplasmic portion of the chain corresponds to 154–221; the sequence is YFNNANANRN…TYNPCAVLVR (68 aa). Helical transmembrane passes span 222 to 242 and 291 to 311; these read IVTG…IIYF and VLLL…SPLL. Residues 312–348 are Cytoplasmic-facing; the sequence is RLCVWVLGKVSGKAEYAYILQHPGETGYKHLHVRRNS. Helical transmembrane passes span 349–369 and 402–422; these read VYIV…ICSF and ILDI…VMYL. The Cytoplasmic portion of the chain corresponds to 423 to 448; sequence PSDASFLTANADNQPLTDKKTNSISR. A run of 2 helical transmembrane segments spans residues 449-471 and 524-544; these read ALWR…LACI and GFVG…MFLG. Topologically, residues 545–552 are cytoplasmic; the sequence is RLKEFILK.

Belongs to the TrkH potassium transport family. HKT (TC 2.A.38.3) subfamily. In terms of tissue distribution, expressed in shoots. In roots, expressed in epidermis, exodermis, cortex, and sieve elements and companion cells of phloem. In mature leaves, expressed in large highly vacuolated cells of the adaxial epidermis, phloem and xylem.

It is found in the membrane. It carries out the reaction Na(+)(in) = Na(+)(out). Its function is as follows. Functions as a low-affinity sodium transporter. The polypeptide is Cation transporter HKT1;1 (Oryza sativa subsp. japonica (Rice)).